A 417-amino-acid chain; its full sequence is Carboxypeptidase A2 (417 aa).

The N-terminal stretch at 1 to 16 (MRLTPLLVALFGYIYC) is a signal peptide. The propeptide at 17–112 (QETFVGDQVL…EMLFNQQRER (96 aa)) is activation peptide. Residues 120–412 (AYHTLEEIYQ…LGLKTIMEHV (293 aa)) enclose the Peptidase M14 domain. 2 residues coordinate Zn(2+): His177 and Glu180. Residues 177 to 180 (HARE), Arg235, and 252 to 253 (NR) each bind substrate. A disulfide bridge links Cys246 with Cys269. Position 304 (His304) interacts with Zn(2+). Position 305-306 (305-306 (SY)) interacts with substrate. The cysteines at positions 318 and 352 are disulfide-linked. A substrate-binding site is contributed by Tyr356. Glu378 serves as the catalytic Proton donor/acceptor.

This sequence belongs to the peptidase M14 family. Requires Zn(2+) as cofactor.

The protein localises to the secreted. The enzyme catalyses Similar to that of carboxypeptidase A (EC 3.4.17.1), but with a preference for bulkier C-terminal residues.. Its function is as follows. Carboxypeptidase that catalyzes the release of a C-terminal amino acid, with a preference for large aromatic C-terminal residues. The polypeptide is Carboxypeptidase A2 (Cpa2) (Mus musculus (Mouse)).